Here is a 439-residue protein sequence, read N- to C-terminus: General transcription factor IIE subunit 1 (439 aa).

Ala2 is subject to N-acetylalanine. Residues 14-104 (LKRLAKYVIR…NYRTLVNVVK (91 aa)) enclose the HTH TFE/IIEalpha-type domain. Residue Lys67 is modified to N6-acetyllysine. Residues Cys129, Cys132, Cys154, and Cys157 each contribute to the Zn(2+) site. Residues 129-157 (CPVCSSTFTDLEANQLFDPMTGTFRCTFC) form a C4-type zinc finger. Ser268 is subject to Phosphoserine. Low complexity predominate over residues 333-344 (SSAMAGSVGAAA). Residues 333-392 (SSAMAGSVGAAAPVTTANGSDSESETSESDDDSPPRPAAVAVHKREEDEEEDDEFEEVAD) form a disordered region. Composition is skewed to acidic residues over residues 354–364 (SESETSESDDD) and 379–392 (EDEE…EVAD).

It belongs to the TFIIE alpha subunit family. In terms of assembly, tetramer of two alpha and two beta chains. Interacts with TAF6/TAFII80. Interacts with ATF7IP. Interacts with SND1. Part of TBP-based Pol II pre-initiation complex (PIC), in which Pol II core assembles with general transcription factors and other specific initiation factors including GTF2E1, GTF2E2, GTF2F1, GTF2F2, TCEA1, ERCC2, ERCC3, GTF2H2, GTF2H3, GTF2H4, GTF2H5, GTF2A1, GTF2A2, GTF2B and TBP; this large multi-subunit PIC complex mediates DNA unwinding and targets Pol II core to the transcription start site where the first phosphodiester bond forms.

It localises to the nucleus. In terms of biological role, recruits TFIIH to the initiation complex and stimulates the RNA polymerase II C-terminal domain kinase and DNA-dependent ATPase activities of TFIIH. Both TFIIH and TFIIE are required for promoter clearance by RNA polymerase. The sequence is that of General transcription factor IIE subunit 1 (GTF2E1) from Pongo abelii (Sumatran orangutan).